Here is a 190-residue protein sequence, read N- to C-terminus: dCTP deaminase (190 aa).

113–118 (KSTYAR) contacts dCTP. Glu-139 functions as the Proton donor/acceptor in the catalytic mechanism. Positions 158, 172, 181, and 182 each coordinate dCTP.

Belongs to the dCTP deaminase family. As to quaternary structure, homotrimer.

It carries out the reaction dCTP + H2O + H(+) = dUTP + NH4(+). The protein operates within pyrimidine metabolism; dUMP biosynthesis; dUMP from dCTP (dUTP route): step 1/2. Catalyzes the deamination of dCTP to dUTP. This Chlamydia pneumoniae (Chlamydophila pneumoniae) protein is dCTP deaminase.